The chain runs to 213 residues: ATP phosphoribosyltransferase (213 aa).

Belongs to the ATP phosphoribosyltransferase family. Short subfamily. In terms of assembly, heteromultimer composed of HisG and HisZ subunits.

It is found in the cytoplasm. The catalysed reaction is 1-(5-phospho-beta-D-ribosyl)-ATP + diphosphate = 5-phospho-alpha-D-ribose 1-diphosphate + ATP. Its pathway is amino-acid biosynthesis; L-histidine biosynthesis; L-histidine from 5-phospho-alpha-D-ribose 1-diphosphate: step 1/9. Its function is as follows. Catalyzes the condensation of ATP and 5-phosphoribose 1-diphosphate to form N'-(5'-phosphoribosyl)-ATP (PR-ATP). Has a crucial role in the pathway because the rate of histidine biosynthesis seems to be controlled primarily by regulation of HisG enzymatic activity. The polypeptide is ATP phosphoribosyltransferase (Teredinibacter turnerae (strain ATCC 39867 / T7901)).